We begin with the raw amino-acid sequence, 320 residues long: Cytochrome f (320 aa).

A signal peptide spans 1–35 (MQTRKTFSWIKEQITRSISASLMIYIITRTSISSA). Residues Tyr-36, Cys-56, Cys-59, and His-60 each coordinate heme. A helical membrane pass occupies residues 286 to 306 (VQGLLFFLASVILAQIFLVLK).

This sequence belongs to the cytochrome f family. In terms of assembly, the 4 large subunits of the cytochrome b6-f complex are cytochrome b6, subunit IV (17 kDa polypeptide, petD), cytochrome f and the Rieske protein, while the 4 small subunits are PetG, PetL, PetM and PetN. The complex functions as a dimer. It depends on heme as a cofactor.

Its subcellular location is the plastid. It localises to the chloroplast thylakoid membrane. In terms of biological role, component of the cytochrome b6-f complex, which mediates electron transfer between photosystem II (PSII) and photosystem I (PSI), cyclic electron flow around PSI, and state transitions. The protein is Cytochrome f of Panax ginseng (Korean ginseng).